A 264-amino-acid polypeptide reads, in one-letter code: S-methyl-5'-thioadenosine phosphorylase (264 aa).

Phosphate contacts are provided by residues serine 14 and 55 to 56 (RH). Methionine 180 contributes to the substrate binding site. A phosphate-binding site is contributed by threonine 181. 204 to 206 (DVD) contributes to the substrate binding site.

This sequence belongs to the PNP/MTAP phosphorylase family. MTAP subfamily. In terms of assembly, homodimer.

It carries out the reaction S-methyl-5'-thioadenosine + phosphate = 5-(methylsulfanyl)-alpha-D-ribose 1-phosphate + adenine. It functions in the pathway amino-acid biosynthesis; L-methionine biosynthesis via salvage pathway; S-methyl-5-thio-alpha-D-ribose 1-phosphate from S-methyl-5'-thioadenosine (phosphorylase route): step 1/1. With respect to regulation, not inhibited by adenosine, potently inhibited by MT-DADMe-immucillin A. Its function is as follows. Catalyzes the reversible phosphorylation of S-methyl-5'-thioadenosine (MTA) to adenine and 5-methylthioribose-1-phosphate. Involved in the breakdown of MTA, a major by-product of polyamine biosynthesis. Responsible for the first step in the methionine salvage pathway after MTA has been generated from S-adenosylmethionine. Prefers MTA, with 2% activity on adenosine, 0.8% activity on S-adenosyl-L-homocysteine and no activity on other tested nucleosides. In Mycobacterium tuberculosis (strain ATCC 25618 / H37Rv), this protein is S-methyl-5'-thioadenosine phosphorylase.